The following is a 95-amino-acid chain: MSLSEKQINQIAYLARLSLNEVQLKNNTQDLNAIFSLIEQLANIETDGIEPMLHPLHMFQRLRKDVVIEKEQSVLFQSVAPKTRNGYYLVPTVIE.

The protein belongs to the GatC family. Heterotrimer of A, B and C subunits.

The enzyme catalyses L-glutamyl-tRNA(Gln) + L-glutamine + ATP + H2O = L-glutaminyl-tRNA(Gln) + L-glutamate + ADP + phosphate + H(+). It carries out the reaction L-aspartyl-tRNA(Asn) + L-glutamine + ATP + H2O = L-asparaginyl-tRNA(Asn) + L-glutamate + ADP + phosphate + 2 H(+). Functionally, allows the formation of correctly charged Asn-tRNA(Asn) or Gln-tRNA(Gln) through the transamidation of misacylated Asp-tRNA(Asn) or Glu-tRNA(Gln) in organisms which lack either or both of asparaginyl-tRNA or glutaminyl-tRNA synthetases. The reaction takes place in the presence of glutamine and ATP through an activated phospho-Asp-tRNA(Asn) or phospho-Glu-tRNA(Gln). This is Aspartyl/glutamyl-tRNA(Asn/Gln) amidotransferase subunit C from Ruthia magnifica subsp. Calyptogena magnifica.